The primary structure comprises 1218 residues: NACHT, LRR and PYD domains-containing protein 1a allele 1 (1218 aa).

A disordered region spans residues 1-61; that stretch reads MEESQSKQES…SLPGWSSTSN (61 aa). Polar residues predominate over residues 7 to 29; it reads KQESNTRVAQHGSQQDVDPTFQT. Residues 175–484 form the NACHT domain; sequence QLVIIEGAAG…EFFAAMSYIL (310 aa). 181–188 contributes to the ATP binding site; sequence GAAGIGKS. LRR repeat units follow at residues 343 to 364, 673 to 693, and 730 to 750; these read KERNTIIDFNLIGSIPVLLTLC, NLEELDLSGNPLSYSAVRSLC, and RLAELDLRLNDLGDNGVRQLC. Polar residues predominate over residues 799–815; the sequence is TMPTENTDGEESLTSSK. The disordered stretch occupies residues 799–842; the sequence is TMPTENTDGEESLTSSKQQQQQSGDKHMEPLGTDDDFWGPSGPV. The tract at residues 835–968 is ZU5; sequence FWGPSGPVST…HFAVLENPSF (134 aa). Residues 835–1118 enclose the FIIND domain; the sequence is FWGPSGPVST…LRPALPRMAS (284 aa). The segment at 969 to 1118 is UPA; that stretch reads SPMGVLLRMI…LRPALPRMAS (150 aa). Residues 1122 to 1211 enclose the CARD domain; it reads DAPALLHFVD…HLIMDLLEKS (90 aa).

The protein belongs to the NLRP family. In terms of assembly, interacts (via LRR repeats) with BCL2 and BCL2L1 (via the loop between motifs BH4 and BH3). Interacts with NOD2; this interaction is enhanced in the presence of muramyl dipeptide (MDP) and increases IL1B release. Interacts with EIF2AK2/PKR; this interaction requires EIF2AK2 activity, is accompanied by EIF2AK2 autophosphorylation and promotes inflammasome assembly in response to danger-associated signals. Interacts with MEFV; this interaction targets Nlrp1a to degradation by autophagy, hence preventing excessive IL1B- and IL18-mediated inflammation. Interacts with DPP9; leading to inhibit activation of the inflammasome. DPP9 acts via formation of a ternary complex, composed of a DPP9 homodimer, one full-length NLRP1 protein, and one cleaved C-terminus of Nlrp1a (NACHT, LRR and PYD domains-containing protein 1a, C-terminus). Interacts with DPP8; leading to inhibit activation of the inflammasome, probably via formation of a ternary complex with DPP8. As to quaternary structure, interacts with the C-terminal part of Nlrp1a (NACHT, LRR and PYD domains-containing protein 1a, C-terminus) in absence of pathogens and other damage-associated signals. Interacts with the N-terminal part of Nlrp1a (NACHT, LRR and PYD domains-containing protein 1a, N-terminus) in absence of pathogens and other damage-associated signals. Homomultimer; forms the Nlrp1a inflammasome polymeric complex, a filament composed of homopolymers of this form in response to pathogens and other damage-associated signals. The Nlrp1a inflammasome polymeric complex directly recruits pro-caspase-1 (proCASP1) independently of PYCARD/ASC. Interacts (via CARD domain) with CASP1 (via CARD domain); leading to CASP1 activation. Autocatalytically cleaved. Autocatalytic cleavage in FIIND region occurs constitutively, prior to activation signals, and is required for inflammasome activity (IL1B release), possibly by facilitating CASP1 binding. Both N- and C-terminal parts remain associated non-covalently. In terms of processing, (Microbial infection) Cleavage by B.anthracis lethal toxin (LT) endopeptidase promotes ubiquitination and degradation of the N-terminal part, releasing the cleaved C-terminal part of the protein (NACHT, LRR and PYD domains-containing protein 1a, C-terminus), which polymerizes and forms the Nlrp1a inflammasome. Post-translationally, ubiquitinated in response to pathogen-associated signals, leading to its degradation by the proteasome and subsequent release of the cleaved C-terminal part of the protein (NACHT, LRR and PYD domains-containing protein 1a, C-terminus), which polymerizes and forms the Nlrp1a inflammasome.

Its subcellular location is the cytoplasm. It localises to the cytosol. It is found in the nucleus. The protein localises to the inflammasome. Activated by cleavage by B.anthracis lethal toxin (LT) endopeptidase. Cleavage by LT promotes ubiquitination and degradation of the N-terminal part, releasing the cleaved C-terminal part of the protein (NACHT, LRR and PYD domains-containing protein 1a, C-terminus), which polymerizes and forms the Nlrp1a inflammasome. Nlrp1a inflammasome is inhibited by DPP8 and DPP9, which sequester the C-terminal fragment of Nlrp1a (NACHT, LRR and PYD domains-containing protein 1a, C-terminus) in a ternary complex, thereby preventing Nlrp1a oligomerization and activation. Nlrp1a inflammasome is weakly activated by Val-boroPro (Talabostat, PT-100), an inhibitor of dipeptidyl peptidases DPP8 and DPP9. Val-boroPro relieves inhibition of DPP8 and/or DPP9 by promoting disruption of the ternary complex, releasing its C-terminal part from autoinhibition. Weakly activated by Toxoplasma gondii. Acts as the sensor component of the Nlrp1a inflammasome, which mediates inflammasome activation in response to various pathogen-associated signals, leading to subsequent pyroptosis. Inflammasomes are supramolecular complexes that assemble in the cytosol in response to pathogens and other damage-associated signals and play critical roles in innate immunity and inflammation. Acts as a recognition receptor (PRR): recognizes specific pathogens and other damage-associated signals, such as B.anthracis lethal toxin (LT) or Val-boroPro inhibitor, and mediates the formation of the inflammasome polymeric complex. In response to pathogen-associated signals, the N-terminal part of Nlrp1a is degraded by the proteasome, releasing the cleaved C-terminal part of the protein (NACHT, LRR and PYD domains-containing protein 1a, C-terminus), which polymerizes to initiate the formation of the inflammasome complex: the inflammasome directly recruits pro-caspase-1 (proCASP1) independently of PYCARD/ASC and promotes caspase-1 (CASP1) activation, which subsequently cleaves and activates inflammatory cytokines IL1B and IL18 and gasdermin-D (GSDMD), leading to pyroptosis. In the absence of GSDMD expression, the Nlrp1a inflammasome is able to recruit and activate CASP8, leading to activation of gasdermin-E (GSDME). Its function is as follows. Constitutes the precursor of the Nlrp1a inflammasome, which mediates autoproteolytic processing within the FIIND domain to generate the N-terminal and C-terminal parts, which are associated non-covalently in absence of pathogens and other damage-associated signals. Functionally, regulatory part that prevents formation of the Nlrp1a inflammasome: in absence of pathogens and other damage-associated signals, interacts with the C-terminal part of Nlrp1a (NACHT, LRR and PYD domains-containing protein 1a, C-terminus), preventing activation of the Nlrp1a inflammasome. In response to pathogen-associated signals, this part is ubiquitinated by the N-end rule pathway and degraded by the proteasome, releasing the cleaved C-terminal part of the protein, which polymerizes and forms the Nlrp1a inflammasome. In terms of biological role, constitutes the active part of the Nlrp1a inflammasome. In absence of pathogens and other damage-associated signals, interacts with the N-terminal part of Nlrp1a (NACHT, LRR and PYD domains-containing protein 1a, N-terminus), preventing activation of the Nlrp1a inflammasome. In response to pathogen-associated signals, the N-terminal part of Nlrp1a is degraded by the proteasome, releasing this form, which polymerizes to form the Nlrp1a inflammasome complex: the Nlrp1a inflammasome complex then directly recruits pro-caspase-1 (proCASP1) and promotes caspase-1 (CASP1) activation, leading to gasdermin-D (GSDMD) cleavage and subsequent pyroptosis. The sequence is that of NACHT, LRR and PYD domains-containing protein 1a allele 1 from Rattus norvegicus (Rat).